Consider the following 163-residue polypeptide: UPF0587 protein CG4646 (163 aa).

Zn(2+) is bound by residues Cys33, Cys36, Cys68, and Cys71.

The protein belongs to the UPF0587 family.

The polypeptide is UPF0587 protein CG4646 (Drosophila melanogaster (Fruit fly)).